Reading from the N-terminus, the 535-residue chain is CTP synthase (535 aa).

The tract at residues 1 to 267 (MTKYIFVTGG…DQIVCDHLKL (267 aa)) is amidoligase domain. S13 lines the CTP pocket. S13 is a binding site for UTP. 14 to 19 (SLGKGI) provides a ligand contact to ATP. Y54 provides a ligand contact to L-glutamine. D71 serves as a coordination point for ATP. D71 and E141 together coordinate Mg(2+). Residues 148–150 (DIE), 188–193 (KTKPTQ), and K224 each bind CTP. UTP-binding positions include 188-193 (KTKPTQ) and K224. Position 240 to 242 (240 to 242 (RDA)) interacts with ATP. A Glutamine amidotransferase type-1 domain is found at 292-534 (KIALVGKYVE…VKASITNKES (243 aa)). G354 serves as a coordination point for L-glutamine. C381 acts as the Nucleophile; for glutamine hydrolysis in catalysis. L-glutamine is bound by residues 382 to 385 (LGMQ), E405, and R462. Residues H507 and E509 contribute to the active site.

The protein belongs to the CTP synthase family. Homotetramer.

It catalyses the reaction UTP + L-glutamine + ATP + H2O = CTP + L-glutamate + ADP + phosphate + 2 H(+). The enzyme catalyses L-glutamine + H2O = L-glutamate + NH4(+). It carries out the reaction UTP + NH4(+) + ATP = CTP + ADP + phosphate + 2 H(+). Its pathway is pyrimidine metabolism; CTP biosynthesis via de novo pathway; CTP from UDP: step 2/2. Allosterically activated by GTP, when glutamine is the substrate; GTP has no effect on the reaction when ammonia is the substrate. The allosteric effector GTP functions by stabilizing the protein conformation that binds the tetrahedral intermediate(s) formed during glutamine hydrolysis. Inhibited by the product CTP, via allosteric rather than competitive inhibition. Catalyzes the ATP-dependent amination of UTP to CTP with either L-glutamine or ammonia as the source of nitrogen. Regulates intracellular CTP levels through interactions with the four ribonucleotide triphosphates. In Bacillus thuringiensis subsp. konkukian (strain 97-27), this protein is CTP synthase.